We begin with the raw amino-acid sequence, 65 residues long: MDIQQFRGKSVDDLKAHLIELRKEQFSMRMQVAMGQFQKTHEIRRVRRNIARVKYLLSWINRTPA.

This sequence belongs to the universal ribosomal protein uL29 family.

This chain is Large ribosomal subunit protein uL29, found in Xylella fastidiosa (strain Temecula1 / ATCC 700964).